A 2286-amino-acid polypeptide reads, in one-letter code: DNA polymerase epsilon catalytic subunit A (2286 aa).

The tract at residues 1–30 (MSLRSGGRRRADPGADGEASRDDGATSSVS) is disordered. Over residues 9–24 (RRADPGADGEASRDDG) the composition is skewed to basic and acidic residues. S1184, S1297, S1317, and S1940 each carry phosphoserine. Positions 1939 to 1969 (DSQKAGGAEDEQENEDDEEERDGEEEEEAEE) are disordered. Residues 1946-1969 (AEDEQENEDDEEERDGEEEEEAEE) are compositionally biased toward acidic residues. Residues C2158, C2161, C2187, and C2190 each contribute to the Zn(2+) site. The CysA-type zinc-finger motif lies at 2158–2190 (CRSCNFCRDLDLCKDSSFSEDGAVLPQWLCSNC). The [4Fe-4S] cluster site is built by C2221, C2224, C2236, and C2238. The CysB motif signature appears at 2221–2238 (CLKCRGVKETSMPVYCSC).

It belongs to the DNA polymerase type-B family. Component of the DNA polymerase epsilon complex consisting of four subunits: the catalytic subunit POLE and the accessory subunits POLE2, POLE3 and POLE4. Interacts with RAD17 and TOPBP1.

It is found in the nucleus. The enzyme catalyses DNA(n) + a 2'-deoxyribonucleoside 5'-triphosphate = DNA(n+1) + diphosphate. Its function is as follows. Catalytic component of the DNA polymerase epsilon complex. Participates in chromosomal DNA replication. Required during synthesis of the leading DNA strands at the replication fork, binds at/or near replication origins and moves along DNA with the replication fork. Has 3'-5' proofreading exonuclease activity that corrects errors arising during DNA replication. Involved in DNA synthesis during DNA repair. Along with DNA polymerase POLD1 and DNA polymerase POLK, has a role in excision repair (NER) synthesis following UV irradiation. This is DNA polymerase epsilon catalytic subunit A from Homo sapiens (Human).